The primary structure comprises 123 residues: Small ribosomal subunit protein uS12cz/uS12cy (123 aa).

This sequence belongs to the universal ribosomal protein uS12 family. As to quaternary structure, part of the 30S ribosomal subunit.

The protein resides in the plastid. It localises to the chloroplast. Its function is as follows. With S4 and S5 plays an important role in translational accuracy. Located at the interface of the 30S and 50S subunits. In Gossypium barbadense (Sea Island cotton), this protein is Small ribosomal subunit protein uS12cz/uS12cy (rps12-A).